We begin with the raw amino-acid sequence, 5900 residues long: Midasin (5900 aa).

The disordered stretch occupies residues 250-270; that stretch reads GSSVKSKKGGEQQQEGEGEDE. AAA-ATPase protomer regions lie at residues 278–583, 673–1012, 1101–1346, 1411–1721, 1840–2089, and 2167–2451; these read TNTV…LRKQ, EKIS…ALNY, PIIP…IAGY, IVWT…MDKQ, RGMQ…HVLT, and LENI…EIYM. Residues 302–309 and 689–696 contribute to the ATP site; these read GVTGSGKT and GETGTGKT. The interval 796-826 is disordered; that stretch reads QTTTNNTKENNNNNNNNNNNNNNNNNNKKRT. A compositionally biased stretch (low complexity) spans 797 to 821; that stretch reads TTTNNTKENNNNNNNNNNNNNNNNN. ATP contacts are provided by residues 1135–1142, 1438–1445, 1852–1859, and 2184–2191; these read GPTSSGKT, GETGCSKT, GSPGVGKT, and GPTSTSKT. A linker region spans residues 2562-4965; sequence ESAIKSILCE…EGKGKKDVSD (2404 aa). Positions 4932 to 5598 are disordered; that stretch reads GDDGEGGEGG…SVEEKKLTRE (667 aa). The segment covering 4984–5008 has biased composition (acidic residues); that stretch reads KDEDEDEEKEEKDEDEGFDMQDDFE. Residues 5009–5055 are compositionally biased toward basic and acidic residues; the sequence is GEMHDIKKDENKDEDKKDDPNNEKENDKEMGDLEKPEDNVVDEKLWD. The span at 5056–5076 shows a compositional bias: acidic residues; that stretch reads EQDVQDEEEQDEEGKGDETNS. A compositionally biased stretch (basic and acidic residues) spans 5079-5113; the sequence is MMAKQDGKDDNDDDKKDDDKKDDKKKKKEENGKPD. Acidic residues-rich tracts occupy residues 5114 to 5130 and 5139 to 5156; these read ENEE…EDGK and GASD…DDVI. The segment covering 5159 to 5173 has biased composition (basic and acidic residues); the sequence is EQEKEENHGDPRGDD. A compositionally biased stretch (acidic residues) spans 5174–5199; it reads QMEIPEDLELEDPDEGKEDDEQQDGG. Residues 5213-5224 are compositionally biased toward basic and acidic residues; the sequence is DVSKEEEKKKEL. 2 stretches are compositionally biased toward acidic residues: residues 5225-5255 and 5273-5286; these read DGDE…EDKE and EGDE…EEDQ. A compositionally biased stretch (basic and acidic residues) spans 5297–5313; that stretch reads ETPKDSEQPLGVKDKTG. The segment covering 5339–5349 has biased composition (polar residues); it reads GMTQPTPSEND. Over residues 5410-5442 the composition is skewed to basic and acidic residues; that stretch reads SEPKEKAPKQDPNAKENENQDYEFIKDDEKLDK. Over residues 5448-5460 the composition is skewed to low complexity; sequence QALAAATDTQLQD. Positions 5469–5487 are enriched in acidic residues; it reads DQAEQEEDQMDIDEEDDMD. Composition is skewed to basic and acidic residues over residues 5488–5536 and 5551–5570; these read VDHK…KDQQ and QFTK…KAVL. The segment covering 5571 to 5590 has biased composition (acidic residues); sequence DDGDDQEMEQDGDQDDEESV. In terms of domain architecture, VWFA spans 5696-5889; the sequence is QVLLAIDDTE…NIPSILSDTL (194 aa).

Belongs to the midasin family. In terms of assembly, associates with pre-60S ribosomes in the nucleoplasm.

The protein resides in the nucleus. The protein localises to the nucleolus. Its subcellular location is the nucleoplasm. Nuclear chaperone required for maturation and nuclear export of pre-60S ribosome subunits. Functions at successive maturation steps to remove ribosomal factors at critical transition points, first driving the exit of early pre-60S particles from the nucleolus and then driving late pre-60S particles from the nucleus. The sequence is that of Midasin (mdn1) from Dictyostelium discoideum (Social amoeba).